Consider the following 212-residue polypeptide: Pyridoxine/pyridoxamine 5'-phosphate oxidase (212 aa).

Substrate is bound by residues 8-11 and lysine 66; that span reads RREY. FMN contacts are provided by residues 61–66, 76–77, arginine 82, lysine 83, and glutamine 105; these read RIVLLK and FT. Residues tyrosine 123, arginine 127, and serine 131 each contribute to the substrate site. Residues 140–141 and tryptophan 185 contribute to the FMN site; that span reads QS. 191–193 contributes to the substrate binding site; that stretch reads RLH. An FMN-binding site is contributed by arginine 195.

This sequence belongs to the pyridoxamine 5'-phosphate oxidase family. As to quaternary structure, homodimer. Requires FMN as cofactor.

It carries out the reaction pyridoxamine 5'-phosphate + O2 + H2O = pyridoxal 5'-phosphate + H2O2 + NH4(+). It catalyses the reaction pyridoxine 5'-phosphate + O2 = pyridoxal 5'-phosphate + H2O2. Its pathway is cofactor metabolism; pyridoxal 5'-phosphate salvage; pyridoxal 5'-phosphate from pyridoxamine 5'-phosphate: step 1/1. It participates in cofactor metabolism; pyridoxal 5'-phosphate salvage; pyridoxal 5'-phosphate from pyridoxine 5'-phosphate: step 1/1. In terms of biological role, catalyzes the oxidation of either pyridoxine 5'-phosphate (PNP) or pyridoxamine 5'-phosphate (PMP) into pyridoxal 5'-phosphate (PLP). The chain is Pyridoxine/pyridoxamine 5'-phosphate oxidase from Shewanella sp. (strain ANA-3).